We begin with the raw amino-acid sequence, 182 residues long: Ribosome maturation factor RimM (182 aa).

Residues 103-182 (EDEFYWRELF…RIEVDWDPAF (80 aa)) form the PRC barrel domain.

Belongs to the RimM family. Binds ribosomal protein uS19.

The protein resides in the cytoplasm. Functionally, an accessory protein needed during the final step in the assembly of 30S ribosomal subunit, possibly for assembly of the head region. Essential for efficient processing of 16S rRNA. May be needed both before and after RbfA during the maturation of 16S rRNA. It has affinity for free ribosomal 30S subunits but not for 70S ribosomes. In Vibrio cholerae serotype O1 (strain ATCC 39315 / El Tor Inaba N16961), this protein is Ribosome maturation factor RimM.